Consider the following 713-residue polypeptide: Glutamine-dependent NAD(+) synthetase (713 aa).

The CN hydrolase domain occupies 4-275 (VTLATCNLNQ…IEVITATVDL (272 aa)). The active-site Proton acceptor; for glutaminase activity is glutamate 44. Catalysis depends on lysine 114, which acts as the For glutaminase activity. Cysteine 175 functions as the Nucleophile; for glutaminase activity in the catalytic mechanism. The tract at residues 324-703 (YNTPAEEIGF…QRPQLKNTVN (380 aa)) is ligase. ATP is bound at residue 354–361 (PLSGGADS). The active site involves serine 356.

The protein in the C-terminal section; belongs to the NAD synthetase family.

The enzyme catalyses deamido-NAD(+) + L-glutamine + ATP + H2O = L-glutamate + AMP + diphosphate + NAD(+) + H(+). The protein operates within cofactor biosynthesis; NAD(+) biosynthesis; NAD(+) from deamido-NAD(+) (L-Gln route): step 1/1. In Dictyostelium discoideum (Social amoeba), this protein is Glutamine-dependent NAD(+) synthetase (nadsyn1).